Reading from the N-terminus, the 550-residue chain is Protein UshA (550 aa).

An N-terminal signal peptide occupies residues 1–25 (MRFSLSTTAAALAVSLAFAPGWAVA). A divalent metal cation is bound by residues Asp-41, His-43, Asp-84, Asn-116, His-217, His-252, and Gln-254. Cys-258 and Cys-275 are disulfide-bonded. Residues 375–379 (RSKVR) and 498–504 (FNALGGD) each bind substrate.

This sequence belongs to the 5'-nucleotidase family. Co(2+) serves as cofactor.

It localises to the periplasm. The catalysed reaction is UDP-sugar + H2O = UMP + alpha-D-aldose 1-phosphate.. It catalyses the reaction a ribonucleoside 5'-phosphate + H2O = a ribonucleoside + phosphate. Functionally, degradation of external UDP-glucose to uridine monophosphate and glucose-1-phosphate, which can then be used by the cell. This chain is Protein UshA (ushA), found in Yersinia enterocolitica serotype O:8 / biotype 1B (strain NCTC 13174 / 8081).